Here is a 158-residue protein sequence, read N- to C-terminus: Regulator of sigma D (158 aa).

This sequence belongs to the Rsd/AlgQ family. As to quaternary structure, interacts with RpoD.

Its subcellular location is the cytoplasm. Functionally, binds RpoD and negatively regulates RpoD-mediated transcription activation by preventing the interaction between the primary sigma factor RpoD with the catalytic core of the RNA polymerase and with promoter DNA. May be involved in replacement of the RNA polymerase sigma subunit from RpoD to RpoS during the transition from exponential growth to the stationary phase. This is Regulator of sigma D from Escherichia coli O6:H1 (strain CFT073 / ATCC 700928 / UPEC).